Reading from the N-terminus, the 126-residue chain is Small ribosomal subunit protein uS13 (126 aa).

A disordered region spans residues 98-126; it reads PVRGQSTKNNARTRKGRKKTVANKKKATK. Positions 108–126 are enriched in basic residues; that stretch reads ARTRKGRKKTVANKKKATK.

It belongs to the universal ribosomal protein uS13 family. As to quaternary structure, part of the 30S ribosomal subunit. Forms a loose heterodimer with protein S19. Forms two bridges to the 50S subunit in the 70S ribosome.

Functionally, located at the top of the head of the 30S subunit, it contacts several helices of the 16S rRNA. In the 70S ribosome it contacts the 23S rRNA (bridge B1a) and protein L5 of the 50S subunit (bridge B1b), connecting the 2 subunits; these bridges are implicated in subunit movement. Contacts the tRNAs in the A and P-sites. The protein is Small ribosomal subunit protein uS13 of Phocaeicola vulgatus (strain ATCC 8482 / DSM 1447 / JCM 5826 / CCUG 4940 / NBRC 14291 / NCTC 11154) (Bacteroides vulgatus).